A 406-amino-acid polypeptide reads, in one-letter code: Testis-specific Y-encoded-like protein 4 (406 aa).

Disordered regions lie at residues methionine 1–glycine 63, glycine 81–lysine 121, glutamate 161–arginine 189, and valine 387–glycine 406. Residues asparagine 8–histidine 20 show a composition bias toward polar residues. Residues aspartate 93–aspartate 102 show a composition bias toward low complexity. The span at glutamine 167–proline 188 shows a compositional bias: basic and acidic residues.

This sequence belongs to the nucleosome assembly protein (NAP) family.

The polypeptide is Testis-specific Y-encoded-like protein 4 (Tspyl4) (Mus musculus (Mouse)).